Consider the following 152-residue polypeptide: Atypical leghemoglobin 2-1 (152 aa).

The Globin domain maps to 3-152; sequence TFSEEQEALV…LAGVIKKGMS (150 aa). Y31 is subject to Nitrated tyrosine. S46 provides a ligand contact to heme b. S46 is modified (phosphoserine). Residue H64 participates in O2 binding. Heme b is bound by residues K67, H99, and R102. Y140 carries the nitrated tyrosine modification.

Belongs to the plant globin family. In terms of assembly, monomer. Nitrated in effective nodules and particularly in hypoxic conditions; this mechanism may play a protective role in the symbiosis by buffering toxic peroxynitrite NO(2)(-). Nitration level decrease during nodule senescence. Post-translationally, phosphorylation at Ser-46 disrupts the molecular environment of its porphyrin ring oxygen binding pocket, thus leading to a reduced oxygen consumption and to the delivery of oxygen O(2) to symbiosomes. Mainly expressed in leaves and, at low levels, in roots of non-nodulated plants. However, accumulates also in nodules and roots, and, to a lower extent, in leaves, stems, flowers and fruits, in nodulated plants.

Atypical leghemoglobin that reversibly binds oxygen O(2) through a pentacoordinated heme iron. In nodules, facilitates the diffusion of oxygen to the bacteroids while preventing the bacterial nitrogenase from being inactivated by buffering dioxygen, nitric oxide and carbon monoxide. This role is essential for symbiotic nitrogen fixation (SNF). Seems not restricted to symbiotic nitrogen fixation and root nodules formation, but also contributes to general plant development and metabolism. The protein is Atypical leghemoglobin 2-1 of Lotus japonicus (Lotus corniculatus var. japonicus).